The following is a 428-amino-acid chain: Nematode resistance protein-like HSPRO1 (428 aa).

In terms of assembly, interacts with SNF4.

The protein localises to the cytoplasm. In terms of biological role, positive regulator of basal resistance. This chain is Nematode resistance protein-like HSPRO1 (HSPRO1), found in Arabidopsis thaliana (Mouse-ear cress).